Consider the following 158-residue polypeptide: SsrA-binding protein (158 aa).

Residues 133-158 (QLHDKRETEKKRDWNKEKGRLLRDKH) form a disordered region.

It belongs to the SmpB family.

The protein localises to the cytoplasm. In terms of biological role, required for rescue of stalled ribosomes mediated by trans-translation. Binds to transfer-messenger RNA (tmRNA), required for stable association of tmRNA with ribosomes. tmRNA and SmpB together mimic tRNA shape, replacing the anticodon stem-loop with SmpB. tmRNA is encoded by the ssrA gene; the 2 termini fold to resemble tRNA(Ala) and it encodes a 'tag peptide', a short internal open reading frame. During trans-translation Ala-aminoacylated tmRNA acts like a tRNA, entering the A-site of stalled ribosomes, displacing the stalled mRNA. The ribosome then switches to translate the ORF on the tmRNA; the nascent peptide is terminated with the 'tag peptide' encoded by the tmRNA and targeted for degradation. The ribosome is freed to recommence translation, which seems to be the essential function of trans-translation. The chain is SsrA-binding protein from Beijerinckia indica subsp. indica (strain ATCC 9039 / DSM 1715 / NCIMB 8712).